A 179-amino-acid polypeptide reads, in one-letter code: Adenine phosphoribosyltransferase (179 aa).

Belongs to the purine/pyrimidine phosphoribosyltransferase family. As to quaternary structure, homodimer.

The protein localises to the cytoplasm. The catalysed reaction is AMP + diphosphate = 5-phospho-alpha-D-ribose 1-diphosphate + adenine. Its pathway is purine metabolism; AMP biosynthesis via salvage pathway; AMP from adenine: step 1/1. Its function is as follows. Catalyzes a salvage reaction resulting in the formation of AMP, that is energically less costly than de novo synthesis. The polypeptide is Adenine phosphoribosyltransferase (Azorhizobium caulinodans (strain ATCC 43989 / DSM 5975 / JCM 20966 / LMG 6465 / NBRC 14845 / NCIMB 13405 / ORS 571)).